Consider the following 277-residue polypeptide: Large ribosomal subunit protein uL2 (277 aa).

Disordered regions lie at residues 24–55 and 221–277; these read ITTS…RHHG and RGSV…RKKK.

This sequence belongs to the universal ribosomal protein uL2 family. As to quaternary structure, part of the 50S ribosomal subunit. Forms a bridge to the 30S subunit in the 70S ribosome.

Functionally, one of the primary rRNA binding proteins. Required for association of the 30S and 50S subunits to form the 70S ribosome, for tRNA binding and peptide bond formation. It has been suggested to have peptidyltransferase activity; this is somewhat controversial. Makes several contacts with the 16S rRNA in the 70S ribosome. This Listeria welshimeri serovar 6b (strain ATCC 35897 / DSM 20650 / CCUG 15529 / CIP 8149 / NCTC 11857 / SLCC 5334 / V8) protein is Large ribosomal subunit protein uL2.